The chain runs to 67 residues: Small ribosomal subunit protein eS31 (67 aa).

The Zn(2+) site is built by Cys35, Cys38, Cys54, and Cys57. The C4-type zinc-finger motif lies at 35–57; the sequence is CPRCGSIMAHHMKPLERWACGKC.

This sequence belongs to the eukaryotic ribosomal protein eS31 family. In terms of assembly, part of the 30S ribosomal subunit. It depends on Zn(2+) as a cofactor.

This Sulfolobus acidocaldarius (strain ATCC 33909 / DSM 639 / JCM 8929 / NBRC 15157 / NCIMB 11770) protein is Small ribosomal subunit protein eS31.